Consider the following 351-residue polypeptide: Geranylgeranyl pyrophosphate synthase (351 aa).

Isopentenyl diphosphate is bound by residues Lys55, Arg58, and Gln93. Asp100 and Asp104 together coordinate Mg(2+). Arg109 contacts dimethylallyl diphosphate. Isopentenyl diphosphate is bound at residue Arg110. 5 residues coordinate dimethylallyl diphosphate: Lys196, Thr197, Gln236, Lys253, and Lys262.

It belongs to the FPP/GGPP synthase family. Interacts with fps1. Mg(2+) is required as a cofactor.

It localises to the cytoplasm. The protein resides in the nucleus. It carries out the reaction isopentenyl diphosphate + dimethylallyl diphosphate = (2E)-geranyl diphosphate + diphosphate. The enzyme catalyses isopentenyl diphosphate + (2E)-geranyl diphosphate = (2E,6E)-farnesyl diphosphate + diphosphate. It catalyses the reaction isopentenyl diphosphate + (2E,6E)-farnesyl diphosphate = (2E,6E,10E)-geranylgeranyl diphosphate + diphosphate. The protein operates within isoprenoid biosynthesis; farnesyl diphosphate biosynthesis; farnesyl diphosphate from geranyl diphosphate and isopentenyl diphosphate: step 1/1. It participates in isoprenoid biosynthesis; geranyl diphosphate biosynthesis; geranyl diphosphate from dimethylallyl diphosphate and isopentenyl diphosphate: step 1/1. It functions in the pathway isoprenoid biosynthesis; geranylgeranyl diphosphate biosynthesis; geranylgeranyl diphosphate from farnesyl diphosphate and isopentenyl diphosphate: step 1/1. Its function is as follows. Catalyzes the trans-addition of the 3 molecules of IPP onto DMAPP to form geranylgeranyl pyrophosphate. Required for the membrane attachment of ypt7 and rhb1. May be involved in vesicle trafficking and protein sorting. Required for forespore membrane formation. This chain is Geranylgeranyl pyrophosphate synthase (spo9), found in Schizosaccharomyces pombe (strain 972 / ATCC 24843) (Fission yeast).